Consider the following 445-residue polypeptide: Vacuolar fusion protein CCZ1 homolog (445 aa).

It belongs to the CCZ1 family.

This Dictyostelium discoideum (Social amoeba) protein is Vacuolar fusion protein CCZ1 homolog.